The chain runs to 856 residues: Probable alpha,alpha-trehalose-phosphate synthase [UDP-forming] 8 (856 aa).

The residue at position 5 (S5) is a Phosphoserine. T32 is modified (phosphothreonine). The glycosyltransferase stretch occupies residues 57–541 (ERKIIVANML…AKSFMQDLER (485 aa)).

The protein in the N-terminal section; belongs to the glycosyltransferase 20 family. This sequence in the C-terminal section; belongs to the trehalose phosphatase family. As to expression, expressed in leaves, roots, stems and flowers.

It carries out the reaction D-glucose 6-phosphate + UDP-alpha-D-glucose = alpha,alpha-trehalose 6-phosphate + UDP + H(+). This chain is Probable alpha,alpha-trehalose-phosphate synthase [UDP-forming] 8 (TPS8), found in Arabidopsis thaliana (Mouse-ear cress).